Consider the following 102-residue polypeptide: DET1- and DDB1-associated protein 1 (102 aa).

Ala2 is subject to N-acetylalanine. Position 33 is a phosphoserine (Ser33). Basic and acidic residues-rich tracts occupy residues 66–75 (KNAAKKRDQE) and 91–102 (ARTDSPDMHEDT). The disordered stretch occupies residues 66–102 (KNAAKKRDQEQVELEGESSAPPRKVARTDSPDMHEDT). Phosphoserine is present on Ser95.

The protein belongs to the DDA1 family. As to quaternary structure, component of numerous DCX (DDB1-CUL4-X-box) E3 ubiquitin-protein ligase complexes which consist of a core of DDB1, cullin-4 (CUL4A or CUL4B), DDA1 and RBX1. Component of the DCX(DCAF15) complex, also named CLR4(DCAF15) complex, composed of DCAF15, DDB1, cullin-4 (CUL4A or CUL4B), DDA1 and RBX1. Part of the DDD core complex containing DET1, DDA1 and DDB1; the DDD core complex recruits a specific UBE2E enzyme, such as UBE2E1, UBE2E2 UBE2E3, to form specific DDD-E2 complexes.

It participates in protein modification; protein ubiquitination. In terms of biological role, functions as a component of numerous distinct DCX (DDB1-CUL4-X-box) E3 ubiquitin-protein ligase complexes which mediate the ubiquitination and subsequent proteasomal degradation of target proteins. In the DCX complexes, acts as a scaffolding subunit required to stabilize the complex. This is DET1- and DDB1-associated protein 1 from Bos taurus (Bovine).